Reading from the N-terminus, the 98-residue chain is Integration host factor subunit alpha (98 aa).

Residues 49–71 (FGNFDLRDKNQRPGRNPKTGEDI) form a disordered region.

This sequence belongs to the bacterial histone-like protein family. Heterodimer of an alpha and a beta chain.

Functionally, this protein is one of the two subunits of integration host factor, a specific DNA-binding protein that functions in genetic recombination as well as in transcriptional and translational control. The chain is Integration host factor subunit alpha from Pectobacterium atrosepticum (strain SCRI 1043 / ATCC BAA-672) (Erwinia carotovora subsp. atroseptica).